The following is a 470-amino-acid chain: Ribulose bisphosphate carboxylase large chain (470 aa).

K5 is modified (N6,N6,N6-trimethyllysine). Substrate-binding residues include N114 and T164. K166 (proton acceptor) is an active-site residue. K168 is a substrate binding site. Mg(2+) contacts are provided by K192, D194, and E195. The residue at position 192 (K192) is an N6-carboxylysine. The Proton acceptor role is filled by H285. Substrate contacts are provided by R286, H318, and S370.

It belongs to the RuBisCO large chain family. Type I subfamily. In terms of assembly, heterohexadecamer of 8 large chains and 8 small chains; disulfide-linked. The disulfide link is formed within the large subunit homodimers. Requires Mg(2+) as cofactor. The disulfide bond which can form in the large chain dimeric partners within the hexadecamer appears to be associated with oxidative stress and protein turnover.

The protein localises to the plastid. It localises to the chloroplast. The catalysed reaction is 2 (2R)-3-phosphoglycerate + 2 H(+) = D-ribulose 1,5-bisphosphate + CO2 + H2O. It carries out the reaction D-ribulose 1,5-bisphosphate + O2 = 2-phosphoglycolate + (2R)-3-phosphoglycerate + 2 H(+). RuBisCO catalyzes two reactions: the carboxylation of D-ribulose 1,5-bisphosphate, the primary event in carbon dioxide fixation, as well as the oxidative fragmentation of the pentose substrate in the photorespiration process. Both reactions occur simultaneously and in competition at the same active site. This is Ribulose bisphosphate carboxylase large chain from Kigelia africana (Sausage tree).